A 264-amino-acid chain; its full sequence is Probable DNA polymerase sliding clamp 2 (264 aa).

Residues 75-94 (SIAQEATVGIKISNFVRILD) mediate DNA binding.

Belongs to the PCNA family.

Functionally, sliding clamp subunit. Responsible for tethering the catalytic subunit of DNA polymerase to DNA during high-speed replication. This chain is Probable DNA polymerase sliding clamp 2, found in Paramecium bursaria Chlorella virus 1 (PBCV-1).